The following is a 101-amino-acid chain: Urease subunit beta (101 aa).

It belongs to the urease beta subunit family. In terms of assembly, heterotrimer of UreA (gamma), UreB (beta) and UreC (alpha) subunits. Three heterotrimers associate to form the active enzyme.

It is found in the cytoplasm. It catalyses the reaction urea + 2 H2O + H(+) = hydrogencarbonate + 2 NH4(+). It functions in the pathway nitrogen metabolism; urea degradation; CO(2) and NH(3) from urea (urease route): step 1/1. The sequence is that of Urease subunit beta from Bradyrhizobium sp. (strain ORS 278).